The primary structure comprises 485 residues: Ribulose bisphosphate carboxylase large chain 2 (485 aa).

Substrate-binding residues include Asn-125 and Thr-175. Lys-177 serves as the catalytic Proton acceptor. Position 179 (Lys-179) interacts with substrate. Mg(2+) contacts are provided by Lys-203, Asp-205, and Glu-206. Lys-203 carries the N6-carboxylysine modification. The active-site Proton acceptor is His-295. The substrate site is built by Arg-296, His-328, and Ser-380.

This sequence belongs to the RuBisCO large chain family. Type I subfamily. As to quaternary structure, heterohexadecamer of 8 large chains and 8 small chains. Mg(2+) is required as a cofactor.

The enzyme catalyses 2 (2R)-3-phosphoglycerate + 2 H(+) = D-ribulose 1,5-bisphosphate + CO2 + H2O. It carries out the reaction D-ribulose 1,5-bisphosphate + O2 = 2-phosphoglycolate + (2R)-3-phosphoglycerate + 2 H(+). In terms of biological role, ruBisCO catalyzes two reactions: the carboxylation of D-ribulose 1,5-bisphosphate, the primary event in carbon dioxide fixation, as well as the oxidative fragmentation of the pentose substrate. Both reactions occur simultaneously and in competition at the same active site. The polypeptide is Ribulose bisphosphate carboxylase large chain 2 (Methylibium petroleiphilum (strain ATCC BAA-1232 / LMG 22953 / PM1)).